An 813-amino-acid polypeptide reads, in one-letter code: LPS-assembly protein LptD (813 aa).

The signal sequence occupies residues 1–22 (MRRALRLLPLPLSIAICLPAMA).

It belongs to the LptD family. As to quaternary structure, component of the lipopolysaccharide transport and assembly complex. Interacts with LptE and LptA.

Its subcellular location is the cell outer membrane. Its function is as follows. Together with LptE, is involved in the assembly of lipopolysaccharide (LPS) at the surface of the outer membrane. In Xanthomonas oryzae pv. oryzae (strain MAFF 311018), this protein is LPS-assembly protein LptD.